The chain runs to 242 residues: Ras-like protein family member 11A (242 aa).

The interval 17-241 (ESSSDYLLPK…SSKAKAASTL (225 aa)) is small GTPase-like. GTP contacts are provided by residues 34-41 (GASCVGKS), 81-85 (DTPGG), and 147-150 (NKGD).

It belongs to the small GTPase superfamily. Ras family. Interacts with UBF/UBTF.

The protein localises to the nucleus. Its subcellular location is the nucleolus. The catalysed reaction is GTP + H2O = GDP + phosphate + H(+). Regulator of rDNA transcription. Acts in cooperation UBF/UBTF and positively regulates RNA polymerase I transcription. This chain is Ras-like protein family member 11A, found in Rattus norvegicus (Rat).